The chain runs to 402 residues: Phosphoglycerate kinase (402 aa).

Substrate contacts are provided by residues 24 to 26 (DLN), Arg39, 62 to 65 (HLGR), Arg121, and Arg161. Residues Lys211, Gly299, Glu330, and 359–362 (GGDS) contribute to the ATP site.

It belongs to the phosphoglycerate kinase family. Monomer.

The protein resides in the cytoplasm. The catalysed reaction is (2R)-3-phosphoglycerate + ATP = (2R)-3-phospho-glyceroyl phosphate + ADP. Its pathway is carbohydrate degradation; glycolysis; pyruvate from D-glyceraldehyde 3-phosphate: step 2/5. The polypeptide is Phosphoglycerate kinase (Corynebacterium urealyticum (strain ATCC 43042 / DSM 7109)).